A 253-amino-acid polypeptide reads, in one-letter code: MQPETSDQMLYSFLAGNEVGGGGYCVSGDYMTTMQSLCGSSSSTSSYYPLAISGIGETMAQDRALAALRNHKEAERRRRERINSHLNKLRNVLSCNSKTDKATLLAKVVQRVRELKQQTLETSDSDQTLLPSETDEISVLHFGDYSNDGHIIFKASLCCEDRSDLLPDLMEILKSLNMKTLRAEMVTIGGRTRSVLVVAADKEMHGVESVHFLQNALKSLLERSSKSLMERSSGGGGGERSKRRRALDHIIMV.

Residues 66–115 (AALRNHKEAERRRRERINSHLNKLRNVLSCNSKTDKATLLAKVVQRVREL) form the bHLH domain.

As to quaternary structure, homodimer.

The protein resides in the nucleus. The sequence is that of Transcription factor bHLH106 (BHLH106) from Arabidopsis thaliana (Mouse-ear cress).